The following is a 147-amino-acid chain: 3-dehydroquinate dehydratase (147 aa).

The Proton acceptor role is filled by Tyr23. Substrate-binding residues include Asn74, His80, and Asp87. His100 functions as the Proton donor in the catalytic mechanism. Residues Leu101 to Ser102 and Arg111 each bind substrate.

It belongs to the type-II 3-dehydroquinase family. As to quaternary structure, homododecamer.

It catalyses the reaction 3-dehydroquinate = 3-dehydroshikimate + H2O. The protein operates within metabolic intermediate biosynthesis; chorismate biosynthesis; chorismate from D-erythrose 4-phosphate and phosphoenolpyruvate: step 3/7. Its function is as follows. Catalyzes a trans-dehydration via an enolate intermediate. This Clostridium botulinum (strain Kyoto / Type A2) protein is 3-dehydroquinate dehydratase.